The chain runs to 91 residues: Islet amyloid polypeptide (91 aa).

Residues 1 to 22 (MCLLQLPVVLLLLSAALNTLKA) form the signal peptide. Residues 23 to 34 (TPIASDTDHRVD) constitute a propeptide that is removed on maturation. Cys-38 and Cys-43 are oxidised to a cystine. Tyrosine amide is present on Tyr-73. Positions 77 to 91 (NAEVVDVELLHYLPL) are excised as a propeptide.

Belongs to the calcitonin family. In terms of assembly, can form homodimers. Interacts with IDE and INS. Interaction with INS inhibits homodimerization and fibril formation.

It localises to the secreted. In terms of biological role, amylin/IAPP is a glucoregulatory peptide hormone that plays an important role in the regulation of energy homeostasis. Selectively inhibits insulin-stimulated glucose utilization and glycogen deposition in muscle, while not affecting adipocyte glucose metabolism. IAPP function is mediated by the CALCR-RAMPs (AMYRs) receptor complexes. Amylin can also bind CALCR receptor in the absence of RAMPs, although it is more selective for AMYRs. The sequence is that of Islet amyloid polypeptide (IAPP) from Octodon degus (Degu).